Here is a 227-residue protein sequence, read N- to C-terminus: Isopentenyl-diphosphate delta-isomerase 2 (227 aa).

K36 contributes to the substrate binding site. The Mg(2+) site is built by H40 and H51. The 151-residue stretch at 49–199 (LLHRAFSVVL…EVKVTPWLRT (151 aa)) folds into the Nudix hydrolase domain. Residues R70 and K74 each contribute to the substrate site. S86 is an active-site residue. Position 87 (S87) interacts with substrate. Mg(2+) contacts are provided by E146 and E148. E148 is a catalytic residue. Residues 225–227 (HRV) carry the Microbody targeting signal motif.

This sequence belongs to the IPP isomerase type 1 family. Mg(2+) serves as cofactor. Muscle-specific expression.

It localises to the peroxisome. It catalyses the reaction isopentenyl diphosphate = dimethylallyl diphosphate. It participates in isoprenoid biosynthesis; dimethylallyl diphosphate biosynthesis; dimethylallyl diphosphate from isopentenyl diphosphate: step 1/1. Its function is as follows. Catalyzes the 1,3-allylic rearrangement of the homoallylic substrate isopentenyl (IPP) to its highly electrophilic allylic isomer, dimethylallyl diphosphate (DMAPP). In Homo sapiens (Human), this protein is Isopentenyl-diphosphate delta-isomerase 2 (IDI2).